An 898-amino-acid chain; its full sequence is DNA topoisomerase 1 (898 aa).

A Toprim domain is found at Ser-2–Thr-126. Residues Glu-8 and Asp-95 each coordinate Mg(2+). In terms of domain architecture, Topo IA-type catalytic spans Asp-141–Glu-583. Positions Ser-175–Gln-180 are interaction with DNA. Catalysis depends on Tyr-320, which acts as the O-(5'-phospho-DNA)-tyrosine intermediate. A disordered region spans residues Ala-840–Gly-898. Over residues Lys-848 to Ser-866 the composition is skewed to basic residues. Residues Lys-867 to Lys-877 are compositionally biased toward low complexity. A compositionally biased stretch (basic residues) spans Thr-878–Ala-888.

This sequence belongs to the type IA topoisomerase family. Monomer. Requires Mg(2+) as cofactor.

The catalysed reaction is ATP-independent breakage of single-stranded DNA, followed by passage and rejoining.. In terms of biological role, releases the supercoiling and torsional tension of DNA, which is introduced during the DNA replication and transcription, by transiently cleaving and rejoining one strand of the DNA duplex. Introduces a single-strand break via transesterification at a target site in duplex DNA. The scissile phosphodiester is attacked by the catalytic tyrosine of the enzyme, resulting in the formation of a DNA-(5'-phosphotyrosyl)-enzyme intermediate and the expulsion of a 3'-OH DNA strand. The free DNA strand then undergoes passage around the unbroken strand, thus removing DNA supercoils. Finally, in the religation step, the DNA 3'-OH attacks the covalent intermediate to expel the active-site tyrosine and restore the DNA phosphodiester backbone. This Synechocystis sp. (strain ATCC 27184 / PCC 6803 / Kazusa) protein is DNA topoisomerase 1.